We begin with the raw amino-acid sequence, 129 residues long: Small ribosomal subunit protein uS11 (129 aa).

Belongs to the universal ribosomal protein uS11 family. Part of the 30S ribosomal subunit. Interacts with proteins S7 and S18. Binds to IF-3.

Its function is as follows. Located on the platform of the 30S subunit, it bridges several disparate RNA helices of the 16S rRNA. Forms part of the Shine-Dalgarno cleft in the 70S ribosome. This chain is Small ribosomal subunit protein uS11, found in Glaesserella parasuis serovar 5 (strain SH0165) (Haemophilus parasuis).